Here is a 342-residue protein sequence, read N- to C-terminus: NADH-quinone oxidoreductase subunit H (342 aa).

Helical transmembrane passes span 15–35 (LLII…LMVA), 86–106 (VLFI…WAVV), 119–139 (VGVL…IIAG), 159–179 (VSYE…VGSL), 190–210 (HVWF…SGLA), 251–271 (FMIC…PFDI), 277–297 (VPGP…FFWV), and 316–336 (VFLP…ELAG).

The protein belongs to the complex I subunit 1 family. NDH-1 is composed of 14 different subunits. Subunits NuoA, H, J, K, L, M, N constitute the membrane sector of the complex.

It is found in the cell inner membrane. It carries out the reaction a quinone + NADH + 5 H(+)(in) = a quinol + NAD(+) + 4 H(+)(out). In terms of biological role, NDH-1 shuttles electrons from NADH, via FMN and iron-sulfur (Fe-S) centers, to quinones in the respiratory chain. The immediate electron acceptor for the enzyme in this species is believed to be ubiquinone. Couples the redox reaction to proton translocation (for every two electrons transferred, four hydrogen ions are translocated across the cytoplasmic membrane), and thus conserves the redox energy in a proton gradient. This subunit may bind ubiquinone. The chain is NADH-quinone oxidoreductase subunit H from Granulibacter bethesdensis (strain ATCC BAA-1260 / CGDNIH1).